The following is an 863-amino-acid chain: Oleate activated transcription factor 3 (863 aa).

A DNA-binding region (zn(2)-C6 fungal-type) is located at residues 19 to 47 (CTNCKKRKSKCDRTKPCGTCVRLGDVDSC). Positions 52–63 (DSSGQPESSPSL) are enriched in polar residues. The interval 52–81 (DSSGQPESSPSLNDADPLRKQSTPAERISP) is disordered.

Belongs to the OAF3 family.

Its subcellular location is the cytoplasm. It localises to the nucleus. The protein resides in the mitochondrion. Transcriptional inhibitor with a significantly increased number of target genes in response to oleate. This is Oleate activated transcription factor 3 (OAF3) from Saccharomyces cerevisiae (strain RM11-1a) (Baker's yeast).